We begin with the raw amino-acid sequence, 2096 residues long: MCSTPGMPAPGASLALRVSFVDVHPDVIPVQLWGLVGERRGEYLRLSREIQEAAATRGQWALGSASASPGELCLVQVGLLWHRCRVVSRQAQESRVFLLDEGRTITAGAGSLAPGRREFFNLPSEVLGCVLAGLVPAGCGAGSGEPPQHWPADAVDFLSNLQGKEVHGCVLDVLLLHRLVLLEVPDVFQQMRELGLARRVPDSLFRSLLERYLTAATASVGSGVPVLSRVPLKQKQPGLDYFYPQLQLGVTEAVVITQVCHPHRIHCQLRSVSQEIHRLSESMAQVYRGSTGTGDENSTSATWEEREESPDKPGSPCASCGLDGHWYRALLLETFRPQRCAQVLHVDYGRKELVSCSSLRYLLPEYFRMPVVTYPCALYGLWDGGRGWSRSQVGDLKTLILGKAVNAKIEFYCSFEHVYYVSLYGEDGINLNRVFGVQSCCLADRVLQSQATEEEEPETSQSQSPAEEVDEEISLPALRSIRLKMNAFYDAQVEFVKNPSEFWIRLRKHNVTFSKLMRRMCGFYSSASKLDGVVLKPEPDDLCCVKWKENGYYRAIVTKLDDKSVDVFLVDRGNSENVDWYDVRMLLPQFRQLPILAVKCTLADIWPLGKTWSQEAVSFFKKTVLHKELVIHILDKQDHQYVIEILDESRTGEENISKVIAQAGYAKYQEFETKENILVNAHSPGHVSNHFTTESNKIPFAKTGEGEQKAKRENKTTSVSKALSDTTVVTNGSTELVVQEKVKRASVYFPLMQNCLEIKPGSSSKGELEVGSTVEVRVSYVENPGYFWCQLTRNIQGLKTLMSDIQYYCKNTAAPHQRNTLACLAKRTVNRQWSRALISGIQSVEHVNVTFVDYGDREMVSVKNIYSISEEFLKVKAQAFRCSLYNLIQPVGQNPFVWDVKAIQAFNEFIDNAWQKNLELKCTIFALASINEELFNIVDLLTPFQSACHFLVEKRLARPVKLQKPLESSVQLHSYFYSTHDMKIGSEELVYITHIDDPWTFYCQLARNANILEQLSCSITQLSKVLLNLKTSPLNPGTLCLAKYTDGNWYRGIVIEKEPKKVFFVDFGNIYVVTSDDLLPIPSDAYDVLLLPMQAVRCSLSDIPDHIPEEVVVWFQETILDKSLKALVVAKDPDGTLIIELYGDNIQISASINKKLGLLSYKDRIRKKESEVLCSTTETLEEKNENMKLPCTEYLSKSVGYKLPNKEILEESYKPQINSSYKELKLLQSLTKTNLVTQYQDSVGNKNSQVFPLTTEKKEEISAETPLKTARVEATLSERKIGDSCDKDLPLKFCEFPQKTIMPGFKTTVYVSHINDLSDFYVQLIEDEAEISHLSERLNSVKTRPEYYVGPPLQRGDMICAVFPEDNLWYRAVIKEQQPNDLLSVQFIDYGNVSVVHTNKIGRLDLVNAILPGLCIHCSLQGFEVPDNKNSKKMMHYFSQRTSEAAIRCEFVKFQDRWEVILADEHGIIADDMISRYALSEKSQVELSTQVIKSASSKSVNKSDIDTSVFLNWYNPEKKMIRAYATVIDGPEYFWCQFADTEKLQCLEVEVQTAGEQVADRRNCIPCPYIGDPCIVRYREDGHYYRALITNICEDYLVSVRLVDFGNIEDCVDPKALWAIPSELLSVPMQAFPCCLSGFNISEGLCSQEGNDYFYEIITEDVLEITILEIRRDVCDIPLAIVDLKSKGKSINEKMEKYSKTGIKSALPYENIDSEIKQTLGSYNLDVGLKKLSNKAVQNKIYMEQQTDELAEITEKDVNIIGTKPSNFRDPKTDNICEGFENPCKDKIDTEELEGELECHLVDKAEFDDKYLITGFNTLLPHANETKEILELNSLEVPLSPDDESKEFLELESIELQNSLVVDEEKGELSPVPPNVPLSQECVTKGAMELFTLQLPLSCEAEKQPELELPTAQLPLDDKMDPLSLGVSQKAQESMCTEDMRKSSCVESFDDQRRMSLHLHGADCDPKTQNEMNICEEEFVEYKNRDAISALMPLFSEEESSDGSKHNNGLPDHISAQLQNTYTLKAFTVGSKCVVWSSLRNTWSKCEILETAEEGTRVLNLSNGMEEIVNPENVWNGIPKLDKSPPEKRGLEVMEI.

One can recognise a Tudor 1 domain in the interval 65–120; that stretch reads ASASPGELCLVQVGLLWHRCRVVSRQAQESRVFLLDEGRTITAGAGSLAPGRREFF. The tract at residues 287 to 316 is disordered; the sequence is YRGSTGTGDENSTSATWEEREESPDKPGSP. Residues 288-302 are compositionally biased toward polar residues; the sequence is RGSTGTGDENSTSAT. A Phosphothreonine modification is found at T293. Tudor domains follow at residues 310–369, 536–593, 816–875, 1033–1088, 1352–1411, and 1567–1626; these read PDKP…YFRM, KPEP…FRQL, HQRN…FLKV, PLNP…AYDV, PLQR…NAIL, and CPYI…ELLS. S1722 and S2062 each carry phosphoserine. Residues 2026 to 2084 enclose the Tudor 8 domain; the sequence is AFTVGSKCVVWSSLRNTWSKCEILETAEEGTRVLNLSNGMEEIVNPENVWNGIPKLDKS.

Found in a mRNP complex (i.e. messenger ribonucleoproteins which correspond to mRNA with bound proteins), at least composed of TDRD1, TDRD6, TDRD7 and DDX4. Found in a complex, at least composed of PIWIL1, PIWIL2, DDX4 and TDRD6. Interacts with Tex19.1 and probably Tex19.2. Interacts with PRMT5. Interacts with SNRPB (when methylated); to trigger spliceosome formation. Undergoes proteolytic cleavage near the C-terminal by an unknown protease during the transition from meiosis I to meiosis II in primary spermatocytes.

It localises to the cytoplasm. Tudor domain-containing protein involved in germ cell development, more specifically the formation of chromatoid body (during spermiogenesis), Balbiani body (during oogenesis), germ plasm (upon fertilization), and for proper miRNA expression and spliceosome maturation. Essential for RNA-dependent helicase UPF1 localization to chromatoid body, for UPF1-UPF2 and UPF1-DDX4 interactions which are required for mRNA degradation, using the extended 3' UTR-triggered nonsense-mediated mRNA decay (NMD) pathway. Involved in spliceosome maturation and mRNA splicing in prophase I spermatocytes through interaction with arginine N-methyltransferase PRMT5 and symmetrically arginine dimethylated SNRPB (small nuclear ribonucleoprotein-associated protein). The protein is Tudor domain-containing protein 6 of Homo sapiens (Human).